Reading from the N-terminus, the 885-residue chain is Protein transport protein SEC24-1 (885 aa).

Residues C164, C167, C186, and C189 each contribute to the Zn(2+) site. Positions 164–189 are zinc finger-like; the sequence is CRRCRSYLNPFVAFIEQGRRWQCNIC. Residues 296-332 form a disordered region; it reads DDYEESDDDDDEDDDDEEEDNEEEEEEEEDEEDDDDS.

This sequence belongs to the SEC23/SEC24 family. SEC24 subfamily. As to quaternary structure, the COPII coat is composed of at least 5 proteins: the SEC23/24 complex, the SEC13/31 complex, and the protein SAR1. Golgi apparatus membrane; Peripheral membrane protein; Cytoplasmic side.

The protein localises to the cytoplasm. It is found in the cytoplasmic vesicle. The protein resides in the COPII-coated vesicle membrane. It localises to the endoplasmic reticulum membrane. Its subcellular location is the golgi apparatus membrane. Functionally, component of the coat protein complex II (COPII) which promotes the formation of transport vesicles from the endoplasmic reticulum (ER). The coat has two main functions, the physical deformation of the endoplasmic reticulum membrane into vesicles and the selection of cargo molecules. In Saccharomyces uvarum (strain ATCC 76518 / CBS 7001 / CLIB 283 / NBRC 10550 / MCYC 623 / NCYC 2669 / NRRL Y-11845) (Yeast), this protein is Protein transport protein SEC24-1 (SEC241).